The sequence spans 35 residues: VSIGIKCDPSIDLCEGQCRIRYFTGYCSGDTCHCS.

Intrachain disulfides connect Cys7–Cys27, Cys14–Cys32, and Cys18–Cys34.

As to expression, expressed by the venom gland.

The protein resides in the secreted. Functionally, neurotoxin. Decreases the action potential of myelinated nerves in mice and frogs. This chain is Neurotoxin, found in Buthus sp. (strain IY-2001) (Scorpion).